Here is a 138-residue protein sequence, read N- to C-terminus: Phosphoribosyl-AMP cyclohydrolase (138 aa).

Residue Asp-84 coordinates Mg(2+). A Zn(2+)-binding site is contributed by Cys-85. 2 residues coordinate Mg(2+): Asp-86 and Asp-88. Zn(2+) contacts are provided by Cys-102 and Cys-109.

This sequence belongs to the PRA-CH family. In terms of assembly, homodimer. It depends on Mg(2+) as a cofactor. Zn(2+) serves as cofactor.

It localises to the cytoplasm. It catalyses the reaction 1-(5-phospho-beta-D-ribosyl)-5'-AMP + H2O = 1-(5-phospho-beta-D-ribosyl)-5-[(5-phospho-beta-D-ribosylamino)methylideneamino]imidazole-4-carboxamide. The protein operates within amino-acid biosynthesis; L-histidine biosynthesis; L-histidine from 5-phospho-alpha-D-ribose 1-diphosphate: step 3/9. Catalyzes the hydrolysis of the adenine ring of phosphoribosyl-AMP. The chain is Phosphoribosyl-AMP cyclohydrolase from Burkholderia cenocepacia (strain ATCC BAA-245 / DSM 16553 / LMG 16656 / NCTC 13227 / J2315 / CF5610) (Burkholderia cepacia (strain J2315)).